The chain runs to 690 residues: Protein arginine N-methyltransferase 7 (690 aa).

SAM-dependent MTase PRMT-type domains follow at residues 14-357 (QNSW…YSLW) and 366-690 (TKSV…QKKL).

The protein belongs to the class I-like SAM-binding methyltransferase superfamily. Protein arginine N-methyltransferase family. PRMT7 subfamily.

Its function is as follows. Essential arginine methyltransferase that can both catalyze the formation of omega-N monomethylarginine (MMA) and symmetrical dimethylarginine (sDMA). Specifically mediates the symmetrical dimethylation of arginine residues in the small nuclear ribonucleoproteins SmD1 and SmD3. The protein is Protein arginine N-methyltransferase 7 (Art7) of Drosophila erecta (Fruit fly).